Consider the following 311-residue polypeptide: Tricarboxylate transport protein, mitochondrial (311 aa).

Positions 1–13 are cleaved as a propeptide — removed in mature form; that stretch reads MAAPRAPRALTAA. Solcar repeat units follow at residues 23-111, 122-208, and 218-303; these read THPG…LSNH, RRGL…LRNW, and MNPL…VVKL. A run of 3 helical transmembrane segments spans residues 29-46, 86-105, and 129-143; these read ILAG…TFPT, GLSS…FGMF, and LGAG…VCPM. Ser156 bears the Phosphoserine mark. The next 3 membrane-spanning stretches (helical) occupy residues 183–202, 224–241, and 278–297; these read GLTA…FFVM, GVFG…NTPL, and GTVP…FVIY.

The protein belongs to the mitochondrial carrier (TC 2.A.29) family. Post-translationally, possesses a short cleavable presequence, which, however, is found to be dispensable both for targeting to mitochondria and insertion into the inner membrane. However, the presequence is required to keep SLC25A1 in a soluble state and thus in an import-competent state. Mature SLC25A1 lacking the presequence is prone to aggregation.

It localises to the mitochondrion inner membrane. The catalysed reaction is (S)-malate(in) + citrate(out) = (S)-malate(out) + citrate(in). It catalyses the reaction citrate(out) + succinate(in) = citrate(in) + succinate(out). The enzyme catalyses D-threo-isocitrate(in) + citrate(out) = D-threo-isocitrate(out) + citrate(in). It carries out the reaction cis-aconitate(in) + citrate(out) = cis-aconitate(out) + citrate(in). The catalysed reaction is trans-aconitate(in) + citrate(out) = trans-aconitate(out) + citrate(in). It catalyses the reaction phosphoenolpyruvate(in) + citrate(out) = phosphoenolpyruvate(out) + citrate(in). The enzyme catalyses maleate(in) + citrate(out) = maleate(out) + citrate(in). Mitochondrial electroneutral antiporter that exports citrate from the mitochondria into the cytosol in exchange for malate. Also able to mediate the exchange of citrate for isocitrate, phosphoenolpyruvate, cis-aconitate and to a lesser extent trans-aconitate, maleate and succinate. In the cytoplasm, citrate plays important roles in fatty acid and sterol synthesis, regulation of glycolysis, protein acetylation, and other physiopathological processes. The sequence is that of Tricarboxylate transport protein, mitochondrial (Slc25a1) from Rattus norvegicus (Rat).